We begin with the raw amino-acid sequence, 517 residues long: Cytochrome P450 monooxygenase cdmJ (517 aa).

Residues 15–35 (YMWSLTLFALCLSAILMFPFL) form a helical membrane-spanning segment. Asn404 is a glycosylation site (N-linked (GlcNAc...) asparagine). Cys451 contacts heme.

The protein belongs to the cytochrome P450 family. Heme serves as cofactor.

It localises to the membrane. It carries out the reaction 3-hydroxypentacecilide A + NADPH + O2 + H(+) = chrodrimanin F + NADP(+) + H2O. It catalyses the reaction chrodrimanin C + NADPH + O2 + H(+) = chrodrimanin H + NADP(+) + H2O. The catalysed reaction is verruculide A + NADPH + O2 + H(+) = chrodrimanin E + NADP(+) + H2O. The enzyme catalyses chrodrimanin T + NADPH + O2 + H(+) = chrodrimanin A + NADP(+) + H2O. Its pathway is secondary metabolite biosynthesis; terpenoid biosynthesis. Cytochrome P450 monooxygenase; part of the gene cluster that mediates the biosynthesis of chrodrimanin B, a meroterpenoid that acts as a potent blocker of insect GABA-gated chloride channels. The first step of the pathway is the biosynthesis of 6-hydroxymellein by the polyketide synthase cdmE. The prenyltransferase cdmH acts as a 6-hydroxymellein 5-farnesyltransferase and produces the hydrophobic metabolite verruculide C. The FAD-dependent monooxygenase cdmI further converts verruculide C into verruculide B. The terpene cyclase cdmG then produced the pentacyclic molecule 3-hydroxypentacecilide A, the backbone structure of chrodrimanin B, via folding the farnesyl moiety of the substrate into the chair-boat conformation. The short-chain dehydrogenase/reductase cdmF functions as the 3-OH dehydrogenase that oxidizes the C-3 hydroxyl group of 3-hydroxypentacecilide A and produces chrodrimanin C, the dehydrogenated product of 3-hydroxypentacecilide A. The cytochrome P450 monooxygenase cdmJ then accepts both 3-hydroxypentacecilide A and chrodrimanin C and functions as a C-7-beta-hydroxylase to produce respectively chrodrimanin H and chrodrimanin F. The dioxygenase cdmA accepts chrodrimanin H to afford chrodrimanin E, which is further transformed to chrodrimanin A by the dioxygenase cdmD. CdmA can also accept chrodrimanin C as substrate to convert it into verruculide A, which is further converted into chrodrimanin T by cdmD. The last step of the biosynthesis is proposed to be performed by the acetyltransferase cdmC which acetylates chrodrimanin A to yield chrodrimanin B. The pathway may also lead to the production of additional shunt products, including chrodrimanins T and U. The polypeptide is Cytochrome P450 monooxygenase cdmJ (Talaromyces verruculosus (Penicillium verruculosum)).